A 100-amino-acid chain; its full sequence is Large ribosomal subunit protein uL23 (100 aa).

This sequence belongs to the universal ribosomal protein uL23 family. In terms of assembly, part of the 50S ribosomal subunit. Contacts protein L29, and trigger factor when it is bound to the ribosome.

Its function is as follows. One of the early assembly proteins it binds 23S rRNA. One of the proteins that surrounds the polypeptide exit tunnel on the outside of the ribosome. Forms the main docking site for trigger factor binding to the ribosome. The chain is Large ribosomal subunit protein uL23 from Synechococcus sp. (strain WH7803).